The following is a 273-amino-acid chain: Undecaprenyl-diphosphatase (273 aa).

The next 7 membrane-spanning stretches (helical) occupy residues 6 to 26 (SLLI…LPVS), 45 to 65 (AKTF…VMFW), 90 to 110 (LTLI…LLFH), 116 to 136 (LFNP…LIAA), 190 to 210 (YAAS…ATAL), 222 to 242 (GDIP…LIAI), and 252 to 272 (ISFI…YVVF).

Belongs to the UppP family.

The protein resides in the cell inner membrane. The enzyme catalyses di-trans,octa-cis-undecaprenyl diphosphate + H2O = di-trans,octa-cis-undecaprenyl phosphate + phosphate + H(+). Catalyzes the dephosphorylation of undecaprenyl diphosphate (UPP). Confers resistance to bacitracin. The chain is Undecaprenyl-diphosphatase from Escherichia coli O7:K1 (strain IAI39 / ExPEC).